Consider the following 1604-residue polypeptide: Calmodulin-regulated spectrin-associated protein 1 (1604 aa).

Residue Ser216 is modified to Phosphoserine. Residues 235–350 form the Calponin-homology (CH) domain; that stretch reads PVDFARVVRY…FIAELFWWFE (116 aa). Phosphoserine occurs at positions 390, 394, and 435. The interval 394-413 is disordered; the sequence is SPAAMSPADLPPSTQPLTEG. The interval 444–491 is disordered; sequence RQKQQKVSQAEEIPDQRHRSNSLTRADGQPRGAAIAWPDKKNRPVSQP. The residue at position 531 (Thr531) is a Phosphothreonine. A phosphoserine mark is found at Ser571, Ser574, Ser581, Ser593, Ser607, Ser647, Ser739, Ser745, Ser755, and Ser757. The tract at residues 642-671 is disordered; sequence MAKRPSEGSQPLVRKKVTGSHGSRDLNRTF. Residues 784–806 are compositionally biased toward basic and acidic residues; the sequence is EEESAKLQEDMKVKEHEDKDDAS. Disordered regions lie at residues 784–824 and 842–888; these read EEES…SMSM and LNSC…KDPA. 2 stretches are compositionally biased toward low complexity: residues 813–824 and 847–858; these read LSTTSQLSSMSM and TKSSTSSSQKTT. Basic and acidic residues predominate over residues 874–886; sequence QKREQSPSRHSKD. Residues 888-909 are sufficient for interaction with SPTBN1; sequence ASLLASELVQLHMQLEEKRRAI. 2 coiled-coil regions span residues 890-926 and 1026-1058; these read LLAS…QRLK and DVNE…QEQL. Residues 920 to 939 form a sufficient for interaction with calmodulin region; that stretch reads SARQRLKLGKAAFLHVVKKG. Disordered stretches follow at residues 1085-1163, 1246-1271, and 1298-1448; these read FVEP…GELP, PDED…KPGV, and RKAE…DRDW. At Ser1090 the chain carries Phosphoserine. A compositionally biased stretch (basic and acidic residues) spans 1113–1124; the sequence is RPAELKVPKDRQ. Residues 1125 to 1137 show a composition bias toward polar residues; sequence QGCSRSKTPTPSV. Ser1154 carries the post-translational modification Phosphoserine. 2 stretches are compositionally biased toward basic and acidic residues: residues 1246 to 1258 and 1298 to 1348; these read PDED…HESS and RKAE…EYLR. Positions 1286-1357 form a coiled coil; sequence AKKRAAFLLK…RRKQQQALEE (72 aa). The span at 1363–1374 shows a compositional bias: basic residues; that stretch reads PKSKPKKPRPKS. Residues 1382 to 1394 are compositionally biased toward polar residues; that stretch reads SDSGTKCSSTPDN. Residues 1395–1412 are compositionally biased toward low complexity; it reads LSQTHSGSSLSLASAATT. A phosphoserine mark is found at Ser1400 and Ser1429. Residues 1465-1599 form the CKK domain; the sequence is GPKLFKEPSS…QPKRPTVPKK (135 aa). At Tyr1539 the chain carries Phosphotyrosine.

This sequence belongs to the CAMSAP1 family. In terms of assembly, interacts with spectrin via SPTBN1; the interaction is direct. Interacts with calmodulin; calcium-dependent it prevents interaction with spectrin. In brain, specifically expressed in astrocytes (at protein level).

It localises to the cytoplasm. Its subcellular location is the cytoskeleton. In terms of biological role, key microtubule-organizing protein that specifically binds the minus-end of non-centrosomal microtubules and regulates their dynamics and organization. Specifically recognizes growing microtubule minus-ends and stabilizes microtubules. Acts on free microtubule minus-ends that are not capped by microtubule-nucleating proteins or other factors and protects microtubule minus-ends from depolymerization. In contrast to CAMSAP2 and CAMSAP3, tracks along the growing tips of minus-end microtubules without significantly affecting the polymerization rate: binds at the very tip of the microtubules minus-end and acts as a minus-end tracking protein (-TIP) that dissociates from microtubules after allowing tubulin incorporation. Through interaction with spectrin may regulate neurite outgrowth. The protein is Calmodulin-regulated spectrin-associated protein 1 (Camsap1) of Rattus norvegicus (Rat).